A 508-amino-acid chain; its full sequence is General transcription factor IIF subunit 1 (508 aa).

At alanine 2 the chain carries N-acetylalanine. A Phosphothreonine modification is found at threonine 156. Residues 177–446 form a disordered region; sequence MQQRRLKDQD…TPSSGDVQVT (270 aa). Phosphoserine occurs at positions 217, 218, 221, and 224. Basic residues predominate over residues 232–251; that stretch reads SKAKKKAPVTKAGRKKKKKK. Composition is skewed to acidic residues over residues 255-270 and 303-325; these read DEAF…EGQE and EQSE…EEEE. Threonine 331 is modified (phosphothreonine). Residues 343–355 are compositionally biased toward acidic residues; the sequence is DDSDSSEESDIDS. Residues 364–374 are compositionally biased toward basic residues; it reads AKKKTPPKRER. Phosphoserine is present on residues serine 377, serine 380, serine 381, and serine 385. Residues 378–388 show a composition bias toward polar residues; the sequence is GGSSKGTSRPG. Threonine 389 carries the phosphothreonine modification. Residues 389-406 are compositionally biased toward low complexity; sequence TPSAEAASTSSTLRAAAS. Serine 391 bears the Phosphoserine mark. Lysine 407 carries the N6-acetyllysine modification. The segment covering 428-443 has biased composition (polar residues); the sequence is GPQSLSGKSTPSSGDV. Serine 431, serine 433, and serine 436 each carry phosphoserine. Threonine 437 bears the Phosphothreonine mark. Serine 440 is modified (phosphoserine).

The protein belongs to the TFIIF alpha subunit family. Heterodimer of an alpha and a beta subunit. Interacts with GTF2F2, CTDP1, TAF6/TAFII80 and URI1. Interacts with GTF2B (via C-terminus and preferentially via acetylated form); this interaction prevents binding of GTF2B to GTF2F2. Part of TBP-based Pol II pre-initiation complex (PIC), in which Pol II core assembles with general transcription factors and other specific initiation factors including GTF2E1, GTF2E2, GTF2F1, GTF2F2, TCEA1, ERCC2, ERCC3, GTF2H2, GTF2H3, GTF2H4, GTF2H5, GTF2A1, GTF2A2, GTF2B and TBP; this large multi-subunit PIC complex mediates DNA unwinding and targets Pol II core to the transcription start site where the first phosphodiester bond forms. In terms of processing, phosphorylated on Ser and other residues by TAF1 and casein kinase II-like kinases.

Its subcellular location is the nucleus. TFIIF is a general transcription initiation factor that binds to RNA polymerase II and helps to recruit it to the initiation complex in collaboration with TFIIB. It promotes transcription elongation. This is General transcription factor IIF subunit 1 (Gtf2f1) from Mus musculus (Mouse).